A 160-amino-acid polypeptide reads, in one-letter code: Ribosomal RNA large subunit methyltransferase H (160 aa).

Leu76 and Gly108 together coordinate S-adenosyl-L-methionine.

It belongs to the RNA methyltransferase RlmH family. In terms of assembly, homodimer.

Its subcellular location is the cytoplasm. It carries out the reaction pseudouridine(1915) in 23S rRNA + S-adenosyl-L-methionine = N(3)-methylpseudouridine(1915) in 23S rRNA + S-adenosyl-L-homocysteine + H(+). In terms of biological role, specifically methylates the pseudouridine at position 1915 (m3Psi1915) in 23S rRNA. The polypeptide is Ribosomal RNA large subunit methyltransferase H (Rhodopseudomonas palustris (strain BisB5)).